The following is a 150-amino-acid chain: Aspartate 1-decarboxylase 1 (150 aa).

Residue Ser24 is the Schiff-base intermediate with substrate; via pyruvic acid of the active site. Ser24 carries the pyruvic acid (Ser) modification. Position 56 (Thr56) interacts with substrate. Catalysis depends on Tyr57, which acts as the Proton donor. 72–74 (GAA) lines the substrate pocket.

Belongs to the PanD family. As to quaternary structure, heterooctamer of four alpha and four beta subunits. It depends on pyruvate as a cofactor. Is synthesized initially as an inactive proenzyme, which is activated by self-cleavage at a specific serine bond to produce a beta-subunit with a hydroxyl group at its C-terminus and an alpha-subunit with a pyruvoyl group at its N-terminus.

It localises to the cytoplasm. It carries out the reaction L-aspartate + H(+) = beta-alanine + CO2. Its pathway is cofactor biosynthesis; (R)-pantothenate biosynthesis; beta-alanine from L-aspartate: step 1/1. Functionally, catalyzes the pyruvoyl-dependent decarboxylation of aspartate to produce beta-alanine. The sequence is that of Aspartate 1-decarboxylase 1 from Mesorhizobium japonicum (strain LMG 29417 / CECT 9101 / MAFF 303099) (Mesorhizobium loti (strain MAFF 303099)).